The sequence spans 358 residues: Peptide chain release factor 1 (358 aa).

Position 233 is an N5-methylglutamine (glutamine 233).

Belongs to the prokaryotic/mitochondrial release factor family. Post-translationally, methylated by PrmC. Methylation increases the termination efficiency of RF1.

It is found in the cytoplasm. Peptide chain release factor 1 directs the termination of translation in response to the peptide chain termination codons UAG and UAA. This chain is Peptide chain release factor 1, found in Blochmanniella floridana.